The chain runs to 295 residues: Bifunctional protein FolD (295 aa).

NADP(+) contacts are provided by residues 166–168 (GRS), Ser191, and Ile232.

Belongs to the tetrahydrofolate dehydrogenase/cyclohydrolase family. As to quaternary structure, homodimer.

It catalyses the reaction (6R)-5,10-methylene-5,6,7,8-tetrahydrofolate + NADP(+) = (6R)-5,10-methenyltetrahydrofolate + NADPH. It carries out the reaction (6R)-5,10-methenyltetrahydrofolate + H2O = (6R)-10-formyltetrahydrofolate + H(+). It participates in one-carbon metabolism; tetrahydrofolate interconversion. In terms of biological role, catalyzes the oxidation of 5,10-methylenetetrahydrofolate to 5,10-methenyltetrahydrofolate and then the hydrolysis of 5,10-methenyltetrahydrofolate to 10-formyltetrahydrofolate. This chain is Bifunctional protein FolD, found in Wolbachia sp. subsp. Brugia malayi (strain TRS).